The following is a 745-amino-acid chain: METSVSEIQVETKDEKGPVAASPQKERQERKTATLCFKRRKKANKTKPKAGSRTAEETKKHTPEAGGSGQRQPAGAWASIKGLVTHRKRSEPAKKQKPPEAEVQPEDGALPKKKAKSRLKFPCLRFSRGAKRSRHSKLTEDSGYVRVQGEADDLEIKAQTQPDDQAIQAGSTQGLQEGVLVRDGKKSQESHISNSVTSGENVIAIELELENKSSAIQMGTPELEKETKVITEKPSVQTQRASLLESSAAGSPRSVTSAAPPSPATTHQHSLEEPSNGIRESAPSGKDDRRKTAAEEKKSGETALGQAEEAAVGQADKRALSQAGEATAGHPEEATVIQAESQAKEGKLSQAEETTVAQAKETVLSQAKEGELSQAKKATVGQAEEATIDHTEKVTVDQAEETTVGQAEEATVGQAGEAILSQAKEATVVGQAEEATVDRAEEATVGQAEEATVGHTEKVTVDQAEEATVGQAEEATVGQAEEATVDWAEKPTVGQAEEATVGQAEEATVGHTEKVTVDQAEEATVGQAEEATVGHTEKVTVDHAEEATVGQAEEATVGQAEKVTVDHAEEATVGQAEEATVGQAEKVTVDHAEEATVGQAEEATVGQAEKVTVDQAEEPTVDQAEEAISSHAPDLKENGIDTEKPRSEESKRMEPIAIIITDTEISEFDVKKSKNVPKQFLISMENEQVGVFANDSDFEGRTSEQYETLLIETASSLVKNAIELSVEQLVNEMVSEDNQINTLFQ.

Residues 1 to 121 (METSVSEIQV…KKKAKSRLKF (121 aa)) form a disordered region. An essential to the intracellular anchoring function region spans residues 1-164 (METSVSEIQV…EIKAQTQPDD (164 aa)). Phosphoserine is present on residues Ser4 and Ser22. A lipid anchor (S-palmitoyl cysteine) is attached at Cys36. Positions 37–50 (FKRRKKANKTKPKA) are enriched in basic residues. Basic and acidic residues-rich tracts occupy residues 54–63 (TAEETKKHTP) and 90–100 (SEPAKKQKPPE). The AKAP CaM-binding motif lies at 74 to 94 (AGAWASIKGLVTHRKRSEPAK). Cys123 carries the S-palmitoyl cysteine lipid modification. Polar residues predominate over residues 162-175 (PDDQAIQAGSTQGL). 2 disordered regions span residues 162–195 (PDDQAIQAGSTQGLQEGVLVRDGKKSQESHISNS) and 215–392 (AIQM…DHTE). 2 stretches are compositionally biased toward basic and acidic residues: residues 180–189 (LVRDGKKSQE) and 222–231 (ELEKETKVIT). Residues 234–268 (PSVQTQRASLLESSAAGSPRSVTSAAPPSPATTHQ) show a composition bias toward polar residues. Basic and acidic residues predominate over residues 285 to 300 (GKDDRRKTAAEEKKSG). One copy of the 1; approximate repeat lies at 304 to 312 (LGQAEEAAV). A 28 X 8 AA repeats of V-G-Q-A-E-E-A-T region spans residues 304-628 (LGQAEEAAVG…PTVDQAEEAI (325 aa)). The 2; approximate repeat unit spans residues 320–327 (LSQAGEAT). Residues 328-335 (AGHPEEAT) form a 3; approximate repeat. A 4; approximate repeat occupies 348-355 (LSQAEETT). The stretch at 356 to 363 (VAQAKETV) is one 5; approximate repeat. The stretch at 364–395 (LSQAKEGELSQAKKATVGQAEEATIDHTEKVT) is one 6; approximate repeat. The stretch at 420–436 (LSQAKEATVVGQAEEAT) is one 7; approximate repeat. The stretch at 445 to 452 (VGQAEEAT) is one 8; approximate repeat. A run of 5 repeats spans residues 461 to 468 (VDQAEEAT), 469 to 476 (VGQAEEAT), 477 to 484 (VGQAEEAT), 485 to 492 (VDWAEKPT), and 493 to 500 (VGQAEEAT). A disordered region spans residues 466–560 (EATVGQAEEA…QAEEATVGQA (95 aa)). The stretch at 501-508 (VGQAEEAT) is one 14; approximate repeat. One copy of the 15; approximate repeat lies at 517-524 (VDQAEEAT). 4 tandem repeats follow at residues 525–532 (VGQAEEAT), 533–540 (VGHTEKVT), 541–548 (VDHAEEAT), and 549–556 (VGQAEEAT). Residues 535–546 (HTEKVTVDHAEE) show a composition bias toward basic and acidic residues. A 20; approximate repeat occupies 557-564 (VGQAEKVT). Copy 21 of the repeat occupies 565-572 (VDHAEEAT). Residues 573–580 (VGQAEEAT) form a 22; approximate repeat. The 23; approximate repeat unit spans residues 581–588 (VGQAEKVT). One copy of the 24; approximate repeat lies at 589–596 (VDHAEEAT). Residues 597 to 604 (VGQAEEAT) form repeat 25. One copy of the 26; approximate repeat lies at 605–612 (VGQAEKVT). One copy of the 27; approximate repeat lies at 613–620 (VDQAEEPT). Positions 617-651 (EEPTVDQAEEAISSHAPDLKENGIDTEKPRSEESK) are disordered. A 28; approximate repeat occupies 621–628 (VDQAEEAI). Residues 633-651 (PDLKENGIDTEKPRSEESK) are compositionally biased toward basic and acidic residues. Positions 706–727 (YETLLIETASSLVKNAIELSVE) are RII-beta subunit binding domain. The tethers NFATC2 to CRAC channels stretch occupies residues 728–745 (QLVNEMVSEDNQINTLFQ).

Binding protein for dimer of the RII-beta regulatory subunit of cAMP-dependent protein kinase (PKA) and also for the protein kinase C (PKC) and the phosphatase calcineurin (PP2B). Each enzyme is inhibited when bound to the anchoring protein. Also binds the beta2-adrenergic receptor. Part of a complex containing AKAP5, ADCY5, ADCY6 and PDE4C. Interacts with ADCY8, and enhances its phosphorylation at lipid rafts. Interacts with ORAI1 (isoform alpha) (via N-terminus) upon store depletion and in response to LTC4. Does not interact with ORAI2 and ORAI3 paralogs. Interacts (via leucine zipper domain) with NFATC2/NFAT1. Interacts with calmodulin; the interaction is calcium-independent. Interacts with KCNQ2; the interaction may help KCNQ2 channel complex to retain calcium-bound calmodulin. Interacts with KCNK2; the channel is recruited to postsynaptic microdomains by AKAP5 where it can integrate neurotransmitter receptor signals. Part of a complex composed of AKAP5 and ADRB2. Post-translationally, palmitoylated. Palmitoylation at Cys-36 and Cys-123 play a key role in the targeting of AKAP5 to lipid rafts. Palmitoylation by ZDHHC2 is required for AKAP5 function in LTP-stimulated recycling endosome exocytosis.

Its subcellular location is the postsynaptic recycling endosome membrane. The protein localises to the cell projection. It localises to the dendrite. It is found in the postsynaptic cell membrane. Its function is as follows. Multivalent scaffold protein that anchors the cAMP-dependent protein kinase/PKA to cytoskeletal and/or organelle-associated proteins, targeting the signal carried by cAMP to specific intracellular effectors. Association with the beta2-adrenergic receptor (beta2-AR) not only regulates beta2-AR signaling pathway, but also the activation by PKA by switching off the beta2-AR signaling cascade. Plays a role in long term synaptic potentiation by regulating protein trafficking from the dendritic recycling endosomes to the plasma membrane and controlling both structural and functional plasticity at excitatory synapses. In hippocampal pyramidal neurons, recruits KCNK2/TREK-1 channel at postsynaptic dense bodies microdomains and converts it to a leak channel no longer sensitive to stimulation by arachidonic acid, acidic pH or mechanical stress, nor inhibited by Gq-coupled receptors but still under the negative control of Gs-coupled receptors. Associates with ORAI1 pore-forming subunit of CRAC channels in Ca(2+) signaling microdomains where it recruits NFATC2/NFAT1 and couples store-operated Ca(2+) influx to calmodulin and calcineurin signaling and activation of NFAT-dependent transcriptional responses. This is A-kinase anchor protein 5 (Akap5) from Mus musculus (Mouse).